The primary structure comprises 633 residues: Pentatricopeptide repeat-containing protein At1g43980, mitochondrial (633 aa).

Residues 1 to 30 (MFQLLRRAHGLCMPSSLYFSRLVNRSLLSK) constitute a mitochondrion transit peptide. PPR repeat units follow at residues 50-80 (TTYW…IPDK), 81-111 (NTIT…MPER), 112-146 (DVVS…EIRP), 147-178 (TEFT…GVSR), 180-210 (NLVV…MEDR), 211-245 (DVVS…EIQP), 246-280 (DEYT…GFLS), 281-311 (NSIV…LEKW), 312-346 (DSVL…SVRP), 347-380 (DKFT…GFDL), 381-411 (DTAV…TDGK), 412-447 (DLIF…SLKP), 448-483 (DRVT…GVNP), and 484-514 (GNEH…IPFE). The tract at residues 519 to 594 (IWEPILCASL…AQGSSKISIE (76 aa)) is type E motif.

Belongs to the PPR family. PCMP-E subfamily.

The protein localises to the mitochondrion. The chain is Pentatricopeptide repeat-containing protein At1g43980, mitochondrial (PCMP-E58) from Arabidopsis thaliana (Mouse-ear cress).